A 199-amino-acid polypeptide reads, in one-letter code: Recombination protein RecR (199 aa).

The segment at 57–72 (CSVCGNLTDDDPCNIC) adopts a C4-type zinc-finger fold. Positions 80 to 176 (STVLVVEDSK…TVTRLARGLA (97 aa)) constitute a Toprim domain.

Belongs to the RecR family.

Its function is as follows. May play a role in DNA repair. It seems to be involved in an RecBC-independent recombinational process of DNA repair. It may act with RecF and RecO. This chain is Recombination protein RecR, found in Streptococcus mutans serotype c (strain ATCC 700610 / UA159).